A 182-amino-acid polypeptide reads, in one-letter code: Protein Syd (182 aa).

This sequence belongs to the Syd family.

The protein resides in the cell inner membrane. Interacts with the SecY protein in vivo. May bind preferentially to an uncomplexed state of SecY, thus functioning either as a chelating agent for excess SecY in the cell or as a regulatory factor that negatively controls the translocase function. This chain is Protein Syd, found in Aliivibrio salmonicida (strain LFI1238) (Vibrio salmonicida (strain LFI1238)).